Reading from the N-terminus, the 99-residue chain is Protein RnfH (99 aa).

This sequence belongs to the UPF0125 (RnfH) family.

In Tolumonas auensis (strain DSM 9187 / NBRC 110442 / TA 4), this protein is Protein RnfH.